The sequence spans 110 residues: Large ribosomal subunit protein uL22 (110 aa).

It belongs to the universal ribosomal protein uL22 family. Part of the 50S ribosomal subunit.

In terms of biological role, this protein binds specifically to 23S rRNA; its binding is stimulated by other ribosomal proteins, e.g. L4, L17, and L20. It is important during the early stages of 50S assembly. It makes multiple contacts with different domains of the 23S rRNA in the assembled 50S subunit and ribosome. Its function is as follows. The globular domain of the protein is located near the polypeptide exit tunnel on the outside of the subunit, while an extended beta-hairpin is found that lines the wall of the exit tunnel in the center of the 70S ribosome. The sequence is that of Large ribosomal subunit protein uL22 from Ruthia magnifica subsp. Calyptogena magnifica.